The chain runs to 264 residues: MEDVQNSPAQVAMPIDRVGVKNLQLPLVVSDRAQGRQHTVATVDIGVDLPAHFKGTHMSRFVEALENWTEELDYASMKRLLEDVKTRLEARKAYVLFRFPYFIRKKAPATGSPGLVCYQCRLTGELEEGRPSFLLEVEVPVMTVCPCSKAISDEGAHSQRAVVRIAVRMTRFSWLEEFIDLAEVSGSSPVYTLLKREDEKYVTEDAFAHPTFVEDVVRAAAQRLERHPQISWFRVEVESFESIHCHNAFASIERTITPETQPGS.

This sequence belongs to the GTP cyclohydrolase IV family.

It carries out the reaction GTP + H2O = 7,8-dihydroneopterin 3'-triphosphate + formate + H(+). It participates in cofactor biosynthesis; 7,8-dihydroneopterin triphosphate biosynthesis; 7,8-dihydroneopterin triphosphate from GTP: step 1/1. In terms of biological role, converts GTP to 7,8-dihydroneopterin triphosphate. This chain is GTP cyclohydrolase FolE2, found in Nitratidesulfovibrio vulgaris (strain ATCC 29579 / DSM 644 / CCUG 34227 / NCIMB 8303 / VKM B-1760 / Hildenborough) (Desulfovibrio vulgaris).